We begin with the raw amino-acid sequence, 357 residues long: Probable leucine aminopeptidase MCYG_04170 (357 aa).

The signal sequence occupies residues 1-15 (MKVLAALALSALALA). A glycan (N-linked (GlcNAc...) asparagine) is linked at Asn-76. Positions 167 and 185 each coordinate Zn(2+). A glycan (N-linked (GlcNAc...) asparagine) is linked at Asn-186. Residues Glu-224 and Asp-251 each coordinate Zn(2+). Cysteines 291 and 295 form a disulfide. His-324 is a Zn(2+) binding site.

Belongs to the peptidase M28 family. M28E subfamily. In terms of assembly, monomer. It depends on Zn(2+) as a cofactor.

The protein localises to the secreted. In terms of biological role, probable extracellular aminopeptidase which contributes to pathogenicity. This Arthroderma otae (strain ATCC MYA-4605 / CBS 113480) (Microsporum canis) protein is Probable leucine aminopeptidase MCYG_04170.